The primary structure comprises 243 residues: Putative C-type lectin protein A7 (243 aa).

The helical transmembrane segment at 23 to 43 (IFFILAATNLMIAAFALGCLA) threads the bilayer. A C-type lectin domain is found at 116 to 223 (GQKACYYVPP…CTTSKLCLCG (108 aa)). 2 disulfides stabilise this stretch: Cys-137–Cys-222 and Cys-198–Cys-214.

The protein resides in the host membrane. This Alcelaphine herpesvirus 1 (strain C500) (AlHV-1) protein is Putative C-type lectin protein A7 (A7).